Reading from the N-terminus, the 190-residue chain is Threonylcarbamoyl-AMP synthase (190 aa).

The region spanning 9 to 190 (FLQLALARQT…IDIVTGQQFR (182 aa)) is the YrdC-like domain.

The protein belongs to the SUA5 family. TsaC subfamily.

The protein resides in the cytoplasm. It catalyses the reaction L-threonine + hydrogencarbonate + ATP = L-threonylcarbamoyladenylate + diphosphate + H2O. Functionally, required for the formation of a threonylcarbamoyl group on adenosine at position 37 (t(6)A37) in tRNAs that read codons beginning with adenine. Catalyzes the conversion of L-threonine, HCO(3)(-)/CO(2) and ATP to give threonylcarbamoyl-AMP (TC-AMP) as the acyladenylate intermediate, with the release of diphosphate. The polypeptide is Threonylcarbamoyl-AMP synthase (Marinobacter nauticus (strain ATCC 700491 / DSM 11845 / VT8) (Marinobacter aquaeolei)).